Consider the following 166-residue polypeptide: Cyclin-dependent kinase 4 inhibitor D (166 aa).

Methionine 1 is subject to N-acetylmethionine. 4 ANK repeats span residues phenylalanine 41–valine 69, serine 73–valine 102, threonine 106–arginine 135, and arginine 138–leucine 166.

The protein belongs to the CDKN2 cyclin-dependent kinase inhibitor family. Interacts with CDK6.

Its subcellular location is the nucleus. It is found in the cytoplasm. Interacts strongly with CDK4 and CDK6 and inhibits them. This Homo sapiens (Human) protein is Cyclin-dependent kinase 4 inhibitor D (CDKN2D).